A 767-amino-acid chain; its full sequence is Cap-specific mRNA (nucleoside-2'-O-)-methyltransferase 2 (767 aa).

Positions 109–322 (ELCTQAWCKF…VYVVCLRYKG (214 aa)) constitute an Adrift-type SAM-dependent 2'-O-MTase domain. The active site involves Lys-117. S-adenosyl-L-methionine-binding residues include Gly-148, Trp-167, and Asp-235. Asp-235 is an active-site residue. Lys-275 serves as the catalytic Proton acceptor.

It localises to the nucleus. Its subcellular location is the cytoplasm. The catalysed reaction is a 5'-end (N(7)-methyl 5'-triphosphoguanosine)-(2'-O-methyl-ribonucleoside)-(ribonucleotide) in mRNA + S-adenosyl-L-methionine = a 5'-end (N(7)-methyl 5'-triphosphoguanosine)-(2'-O-methyl-ribonucleoside)-(2'-O-methyl-ribonucleotide) in mRNA + S-adenosyl-L-homocysteine + H(+). Functionally, S-adenosyl-L-methionine-dependent methyltransferase that mediates mRNA cap2 2'-O-ribose methylation to the 5'-cap structure of mRNAs. Methylates the ribose of the second nucleotide of a m(7)GpppG-capped mRNA and small nuclear RNA (snRNA) (cap0) to produce m(7)GpppRmpNm (cap2). Recognizes a guanosine cap on RNA independently of its N(7) methylation status. Display cap2 methylation on both cap0 and cap1. Displays a preference for cap1 RNAs. This chain is Cap-specific mRNA (nucleoside-2'-O-)-methyltransferase 2 (Cmtr2), found in Mus musculus (Mouse).